The sequence spans 349 residues: NADH-quinone oxidoreductase subunit H (349 aa).

Transmembrane regions (helical) follow at residues 11–31 (FPLL…LLLV), 83–103 (GVFL…WAVI), 116–136 (VGLL…IMGG), 162–182 (IGFV…TTIV), 200–220 (FLDW…ISAL), 252–272 (LFFL…TILF), 288–308 (VPGI…FAMV), and 323–343 (LGWK…AAFL).

The protein belongs to the complex I subunit 1 family. As to quaternary structure, NDH-1 is composed of 14 different subunits. Subunits NuoA, H, J, K, L, M, N constitute the membrane sector of the complex.

It is found in the cell inner membrane. It catalyses the reaction a quinone + NADH + 5 H(+)(in) = a quinol + NAD(+) + 4 H(+)(out). NDH-1 shuttles electrons from NADH, via FMN and iron-sulfur (Fe-S) centers, to quinones in the respiratory chain. The immediate electron acceptor for the enzyme in this species is believed to be ubiquinone. Couples the redox reaction to proton translocation (for every two electrons transferred, four hydrogen ions are translocated across the cytoplasmic membrane), and thus conserves the redox energy in a proton gradient. This subunit may bind ubiquinone. In Bartonella henselae (strain ATCC 49882 / DSM 28221 / CCUG 30454 / Houston 1) (Rochalimaea henselae), this protein is NADH-quinone oxidoreductase subunit H.